Reading from the N-terminus, the 699-residue chain is Elongation factor G (699 aa).

Residues 8-283 enclose the tr-type G domain; it reads EHIRNIGICA…AVVDFLPSPI (276 aa). GTP-binding positions include 17 to 24, 81 to 85, and 135 to 138; these read AHIDAGKT, DTPGH, and NKMD.

It belongs to the TRAFAC class translation factor GTPase superfamily. Classic translation factor GTPase family. EF-G/EF-2 subfamily.

It localises to the cytoplasm. In terms of biological role, catalyzes the GTP-dependent ribosomal translocation step during translation elongation. During this step, the ribosome changes from the pre-translocational (PRE) to the post-translocational (POST) state as the newly formed A-site-bound peptidyl-tRNA and P-site-bound deacylated tRNA move to the P and E sites, respectively. Catalyzes the coordinated movement of the two tRNA molecules, the mRNA and conformational changes in the ribosome. This Rickettsia conorii (strain ATCC VR-613 / Malish 7) protein is Elongation factor G.